The following is a 222-amino-acid chain: Leucyl/phenylalanyl-tRNA--protein transferase (222 aa).

The protein belongs to the L/F-transferase family.

The protein localises to the cytoplasm. The enzyme catalyses N-terminal L-lysyl-[protein] + L-leucyl-tRNA(Leu) = N-terminal L-leucyl-L-lysyl-[protein] + tRNA(Leu) + H(+). It carries out the reaction N-terminal L-arginyl-[protein] + L-leucyl-tRNA(Leu) = N-terminal L-leucyl-L-arginyl-[protein] + tRNA(Leu) + H(+). The catalysed reaction is L-phenylalanyl-tRNA(Phe) + an N-terminal L-alpha-aminoacyl-[protein] = an N-terminal L-phenylalanyl-L-alpha-aminoacyl-[protein] + tRNA(Phe). Functionally, functions in the N-end rule pathway of protein degradation where it conjugates Leu, Phe and, less efficiently, Met from aminoacyl-tRNAs to the N-termini of proteins containing an N-terminal arginine or lysine. This is Leucyl/phenylalanyl-tRNA--protein transferase from Legionella pneumophila (strain Paris).